A 513-amino-acid chain; its full sequence is Putative thymidine phosphorylase 2 (513 aa).

The protein belongs to the thymidine/pyrimidine-nucleoside phosphorylase family. Type 2 subfamily.

It carries out the reaction thymidine + phosphate = 2-deoxy-alpha-D-ribose 1-phosphate + thymine. This Acidovorax sp. (strain JS42) protein is Putative thymidine phosphorylase 2.